Here is a 530-residue protein sequence, read N- to C-terminus: Bifunctional purine biosynthesis protein PurH (530 aa).

The MGS-like domain occupies 1 to 147 (MPSIKRALIS…KNWKHVAIVT (147 aa)).

This sequence belongs to the PurH family.

The catalysed reaction is (6R)-10-formyltetrahydrofolate + 5-amino-1-(5-phospho-beta-D-ribosyl)imidazole-4-carboxamide = 5-formamido-1-(5-phospho-D-ribosyl)imidazole-4-carboxamide + (6S)-5,6,7,8-tetrahydrofolate. The enzyme catalyses IMP + H2O = 5-formamido-1-(5-phospho-D-ribosyl)imidazole-4-carboxamide. It participates in purine metabolism; IMP biosynthesis via de novo pathway; 5-formamido-1-(5-phospho-D-ribosyl)imidazole-4-carboxamide from 5-amino-1-(5-phospho-D-ribosyl)imidazole-4-carboxamide (10-formyl THF route): step 1/1. Its pathway is purine metabolism; IMP biosynthesis via de novo pathway; IMP from 5-formamido-1-(5-phospho-D-ribosyl)imidazole-4-carboxamide: step 1/1. The sequence is that of Bifunctional purine biosynthesis protein PurH from Neisseria meningitidis serogroup A / serotype 4A (strain DSM 15465 / Z2491).